A 315-amino-acid chain; its full sequence is Thioredoxin reductase (315 aa).

45-52 is a binding site for FAD; sequence EGNTPGGK. Cysteines 145 and 148 form a disulfide. 288-297 contributes to the FAD binding site; the sequence is DCRSKSFRQI.

The protein belongs to the class-II pyridine nucleotide-disulfide oxidoreductase family. As to quaternary structure, homodimer. The cofactor is FAD.

It localises to the cytoplasm. It catalyses the reaction [thioredoxin]-dithiol + NADP(+) = [thioredoxin]-disulfide + NADPH + H(+). In Mycoplasma genitalium (strain ATCC 33530 / DSM 19775 / NCTC 10195 / G37) (Mycoplasmoides genitalium), this protein is Thioredoxin reductase (trxB).